A 319-amino-acid polypeptide reads, in one-letter code: ATP-dependent 6-phosphofructokinase (319 aa).

Gly-11 serves as a coordination point for ATP. 21 to 25 (RAVVR) contacts ADP. Residues 72-73 (RC) and 102-105 (GDGS) contribute to the ATP site. Asp-103 contacts Mg(2+). 125–127 (TID) contacts substrate. Residue Asp-127 is the Proton acceptor of the active site. Residue Arg-154 participates in ADP binding. Substrate contacts are provided by residues Arg-162 and 169–171 (MGR). Residues 185–187 (GAE), Arg-211, and 213–215 (KRH) contribute to the ADP site. Substrate contacts are provided by residues Glu-222, Arg-243, and 249–252 (HVQR).

It belongs to the phosphofructokinase type A (PFKA) family. ATP-dependent PFK group I subfamily. Prokaryotic clade 'B1' sub-subfamily. Homotetramer. Mg(2+) is required as a cofactor.

Its subcellular location is the cytoplasm. It catalyses the reaction beta-D-fructose 6-phosphate + ATP = beta-D-fructose 1,6-bisphosphate + ADP + H(+). The protein operates within carbohydrate degradation; glycolysis; D-glyceraldehyde 3-phosphate and glycerone phosphate from D-glucose: step 3/4. Allosterically activated by ADP and other diphosphonucleosides, and allosterically inhibited by phosphoenolpyruvate. In terms of biological role, catalyzes the phosphorylation of D-fructose 6-phosphate to fructose 1,6-bisphosphate by ATP, the first committing step of glycolysis. The polypeptide is ATP-dependent 6-phosphofructokinase (Clostridioides difficile (strain 630) (Peptoclostridium difficile)).